We begin with the raw amino-acid sequence, 180 residues long: MSRVGKLPVAIPNGVTVTVTPDNVVTVKGSKGELVKAMSNKINIAVEDNSVVVTRDNDHKDVRALHGLTRALINNMVTGVNEGYVKTLELIGVGYRAQLQGKKLVLSLGFSHPVEMEAVSGVEFEVEGGTKVKVKGIDKELVGAVAADIRKWRKPEPYKGKGIKYENEVIRRKEGKTGKK.

Belongs to the universal ribosomal protein uL6 family. Part of the 50S ribosomal subunit.

This protein binds to the 23S rRNA, and is important in its secondary structure. It is located near the subunit interface in the base of the L7/L12 stalk, and near the tRNA binding site of the peptidyltransferase center. This chain is Large ribosomal subunit protein uL6, found in Clostridium botulinum (strain Loch Maree / Type A3).